The following is a 42-amino-acid chain: Delta-hexatoxin-Iw1a (42 aa).

Cystine bridges form between Cys1-Cys15, Cys8-Cys20, Cys14-Cys31, and Cys16-Cys42.

Belongs to the neurotoxin 06 (delta-actx) family. In terms of tissue distribution, expressed by the venom gland.

The protein localises to the secreted. In terms of biological role, inhibits tetrodotoxin-sensitive sodium channels by binding to site 3. It slows the inactivation, causes a prolongation of action potential duration resulting in repetitive firing in autonomic and motor nerve fibers. Does not depolarize the resting potential. Does not affect tetrodotoxin-resistant sodium channels. This lethal neurotoxin is active on both insect and mammalian voltage-gated sodium channels (Nav). This Illawarra wisharti (Illawarra funnel-web spider) protein is Delta-hexatoxin-Iw1a.